The primary structure comprises 83 residues: Antitoxin ChpS (83 aa).

The 46-residue stretch at 3–48 folds into the SpoVT-AbrB domain; the sequence is ITIKRWGNSAGMVIPNIVMKELNLQPGQSVEAQVSNNQLILTPISR.

This sequence belongs to the PemI family. In terms of assembly, interacts with ChpB, inhibiting its endoribonuclease activity.

Its function is as follows. Antitoxin component of a type II toxin-antitoxin (TA) system. May be involved in the regulation of cell growth. It acts as a suppressor of the endoribonuclease (inhibitory function) of ChpB protein. Both ChpS and ChpB probably bind to the promoter region of the chpS-chpB operon to autoregulate their synthesis. This is Antitoxin ChpS (chpS) from Escherichia coli (strain K12).